The sequence spans 196 residues: Putative 3-methyladenine DNA glycosylase (196 aa).

This sequence belongs to the DNA glycosylase MPG family.

The polypeptide is Putative 3-methyladenine DNA glycosylase (yxlJ) (Bacillus subtilis (strain 168)).